Reading from the N-terminus, the 51-residue chain is Large ribosomal subunit protein eL39 (51 aa).

This sequence belongs to the eukaryotic ribosomal protein eL39 family.

The protein is Large ribosomal subunit protein eL39 (rpl39e) of Methanothermobacter thermautotrophicus (strain ATCC 29096 / DSM 1053 / JCM 10044 / NBRC 100330 / Delta H) (Methanobacterium thermoautotrophicum).